A 66-amino-acid polypeptide reads, in one-letter code: Alpha-conotoxin Vc1a (66 aa).

The signal sequence occupies residues 1–25; it reads MGMRMMFTVFLLVVLATTVVSSTSG. The propeptide occupies 26–47; that stretch reads RREFRGRNAAAKASDLVSLTDK. Cystine bridges form between cysteine 51–cysteine 57 and cysteine 52–cysteine 65. Residues 53–55 are ser-Xaa-Pro motif, crucial for potent interaction with nAChR; the sequence is SDP. Key region for inhibition of alpha-9-alpha-10/CHRNA9-CHRNA10 nAChR regions lie at residues 54–56 and 60–64; these read DPR and DHPEI. 4-hydroxyproline is present on proline 55. At glutamate 63 the chain carries 4-carboxyglutamate. At cysteine 65 the chain carries Cysteine amide.

The protein belongs to the conotoxin A superfamily. Post-translationally, vc1.1 is described as having no post-translational modifications (except C-terminal amidation), whereas Vc1a contains a hydroxyproline at Pro-55 and a 4-carboxyglutamate at Glu-63 (and a C-terminal amidation). In terms of processing, hydroxylation of Pro-55 is not important for inhibition of alpha-9-alpha-10/CHRNA9-CHRNA10 nAChRs, since [P6O]Vc1.1 (Pro-55 hydroxylated) shows similar inhibition than native toxin (IC(50)=99.1 nM). In contrast, hydroxylation of Pro-55 seems to impair inhibition of HVA calcium channel currents, since [P6O]Vc1.1 has no effect on HVA calcium channel currents. In vivo, hydroxylation of Pro-55 seems to induce the loss of analgesic effects in rat models of neuropathic pain, since [P6O]Vc1.1 has no effect on mechanical allodynia. Gamma-carboxylation of Glu-63 is not important for inhibition of alpha-9-alpha-10/CHRNA9-CHRNA10 nAChRs, since [E14gamma]Vc1.1 (carboxyglutamate at Glu-63) shows similar inhibition than native toxin (IC(50)=65.3 nM). In contrast, gamma-carboxylation of Glu-63 seems to impair inhibition of HVA calcium channel currents, since [E14gamma]Vc1.1 has no effect on HVA calcium channel currents. Post-translationally, non-native isomers 'ribbon' (with disulfide connectivity C1-C4; C2-C3) and 'beads' (with disulfide connectivity C1-C2; C3-C4) of Vc1.1 also inhibit HVA calcium channel currents in rat DRG neurons (20-30% inhibition at 1 uM toxin). It has been shown that both reduced and alkylated Vc1.1 have no effect on HVA calcium channel currents. The observed activity can be attributed to specific isomers. In terms of processing, [C3S]Vc1.1(1-8) mutant is C-terminally amidated. As to expression, expressed by the venom duct.

It localises to the secreted. Alpha-conotoxins act on postsynaptic membranes, they bind to the nicotinic acetylcholine receptors (nAChR) and thus inhibit them. This toxin (native toxin Vc1a; hydroxylated and gamma-carboxylated) blocks alpha-9-alpha-10/CHRNA9-CHRNA10 nAChRs (IC(50)=62.9 nM). In contrast to the non-post-translationally modified analog Vc1.1, Vc1a does not inhibit high voltage-activated (HVA) calcium channel currents. In vivo, in contrast to Vc1.1, Vc1a does not show analgesic effects in rat models of neuropathic pain. Functionally, the synthetic peptide Vc1.1 (a non-hydroxylated and non-gamma-carboxylated analog of Vc1a) has two types of targets. It blocks alpha-9-alpha-10/CHRNA9-CHRNA10 nAChRs (on rat receptors, IC(50)=19-109 nM) (with preference for rat over human receptors) and inhibits high voltage-activated (HVA) calcium channel (Cav2.2, Cav2.3) currents by acting on GABA(B) receptors (GABBR1 and GABBR2) (IC(50)=1.7 nM). It also shows moderate inhibition on alpha-6/alpha-3-beta-2-beta-3 (CHRNA6/CHRNA3-CHRNB2-CHRNB3) (IC(50)=140 nM) and alpha-6/alpha-3-beta-4 (CHRNA6/CHRNA3-CHRNB4) (IC(50)=980 nM). On alpha-9-alpha-10/CHRNA9-CHRNA10 nAChR, it most likely interacts with the alpha-10(+)/alpha-9(-)interface of the receptor. In vivo, it acts as a powerful analgesic in rat models of neuropathic pain. This is Alpha-conotoxin Vc1a from Conus victoriae (Queen Victoria cone).